The sequence spans 364 residues: Probable methyltransferase ICS2 (364 aa).

Residues tyrosine 18, cysteine 61, aspartate 98, leucine 99, serine 133, and phenylalanine 134 each coordinate S-adenosyl-L-homocysteine. The Mg(2+) site is built by asparagine 172, aspartate 258, phenylalanine 260, and asparagine 261.

It belongs to the methyltransferase superfamily. Type-7 methyltransferase family. Mg(2+) serves as cofactor.

In terms of biological role, no detectable N-methyltransferase activity. The sequence is that of Probable methyltransferase ICS2 from Camellia irrawadiensis (Burmese tea).